A 101-amino-acid chain; its full sequence is Gastrin (101 aa).

The first 21 residues, 1-21 (MQRLCVYVLIFALALAAFSEA), serve as a signal peptide directing secretion. The segment at 22–82 (SWKPRSQQPD…SKKQGPWLEE (61 aa)) is disordered. A Pyrrolidone carboxylic acid; in form big gastrin modification is found at glutamine 59. Glutamine 76 bears the Pyrrolidone carboxylic acid; in form gastrin mark. Residue tyrosine 87 is modified to Sulfotyrosine; partial. The residue at position 92 (phenylalanine 92) is a Phenylalanine amide. Serine 96 carries the post-translational modification Phosphoserine. Residues 96–101 (SAEDEN) constitute a propeptide, removed in mature form.

The protein belongs to the gastrin/cholecystokinin family. Two different processing pathways probably exist in antral G-cells. In the dominant pathway progastrin is cleaved at three sites resulting in two major bioactive gastrins, gastrin-34 and gastrin-17. In the putative alternative pathway, progastrin may be processed only at the most C-terminal dibasic site resulting in the synthesis of gastrin-71. In terms of processing, sulfation enhances proteolytic processing, and blocks peptide degradation. Levels of sulfation differ between proteolytically-cleaved gastrins. Thus, gastrin-6 is almost 73% sulfated, whereas the larger gastrins are less than 50% sulfated. Sulfation levels are also tissue-specific.

It localises to the secreted. Gastrin stimulates the stomach mucosa to produce and secrete hydrochloric acid and the pancreas to secrete its digestive enzymes. It also stimulates smooth muscle contraction and increases blood circulation and water secretion in the stomach and intestine. This chain is Gastrin (GAST), found in Homo sapiens (Human).